Reading from the N-terminus, the 545-residue chain is MTTRYIFVTGGVVSSLGKGIAAASLAAILEARGLNVTMMKLDPYINVDPGTMSPTQHGEVFVTEDGAETDLDLGHYERFIRTKMNRRNNFTTGRIYEEVLRKERRGDYLGATIQIIPHITNAIKEKVLAGGEGHDVAIVEIGGTVGDIESLPFLESIRQLSVELGRERSLFMHLTLVPFLGAAGEVKTKPTQHSVKELRSIGIAPDVLVCRGDRPVPANEKAKISLFCNVEERAVISLKDVDSIYKIPALLKAQGLDELVVKRFGITCPEADLHEWEQVIYQEANPTGEVTIGMVGKYIELPDAYKSVNEALKHAGLFNRVSVNIKYIDSQTVEAKGEEVLQGLDGILVPGGFGERGVEGKILAAKYARENNLPYFGICLGLQVALIEFARHVAGLEGAHSTEFNKETPHPVVGLITEWINEEGNVEQRHETSDLGGTMRLGAQLCHLSEGSKAAISYDGNTCVERHRHRYEVNNNYKDRLEKAGLVFSGLSSDRQLVEMIELPNHPWFVAGQFHPEFTSTPRDGQPLFVGFVAAATAYQKRDLG.

Residues 1-266 are amidoligase domain; it reads MTTRYIFVTG…DELVVKRFGI (266 aa). Ser-14 serves as a coordination point for CTP. Ser-14 contributes to the UTP binding site. ATP contacts are provided by residues 15-20 and Asp-72; that span reads SLGKGI. Asp-72 and Glu-140 together coordinate Mg(2+). CTP contacts are provided by residues 147–149, 187–192, and Lys-223; these read DIE and KTKPTQ. Residues 187-192 and Lys-223 each bind UTP; that span reads KTKPTQ. 239–241 lines the ATP pocket; the sequence is KDV. Positions 291 to 542 constitute a Glutamine amidotransferase type-1 domain; the sequence is TIGMVGKYIE…VAAATAYQKR (252 aa). Gly-352 lines the L-glutamine pocket. Cys-379 serves as the catalytic Nucleophile; for glutamine hydrolysis. L-glutamine contacts are provided by residues 380 to 383, Glu-403, and Arg-470; that span reads LGLQ. Active-site residues include His-515 and Glu-517.

This sequence belongs to the CTP synthase family. Homotetramer.

It carries out the reaction UTP + L-glutamine + ATP + H2O = CTP + L-glutamate + ADP + phosphate + 2 H(+). The catalysed reaction is L-glutamine + H2O = L-glutamate + NH4(+). The enzyme catalyses UTP + NH4(+) + ATP = CTP + ADP + phosphate + 2 H(+). It participates in pyrimidine metabolism; CTP biosynthesis via de novo pathway; CTP from UDP: step 2/2. With respect to regulation, allosterically activated by GTP, when glutamine is the substrate; GTP has no effect on the reaction when ammonia is the substrate. The allosteric effector GTP functions by stabilizing the protein conformation that binds the tetrahedral intermediate(s) formed during glutamine hydrolysis. Inhibited by the product CTP, via allosteric rather than competitive inhibition. Catalyzes the ATP-dependent amination of UTP to CTP with either L-glutamine or ammonia as the source of nitrogen. Regulates intracellular CTP levels through interactions with the four ribonucleotide triphosphates. This chain is CTP synthase, found in Shewanella sediminis (strain HAW-EB3).